The primary structure comprises 627 residues: Meiosis-specific transcription factor NDT80 (627 aa).

A DNA-binding region (NDT80) is located at residues 28–335 (EEDTPVILTQ…RSPSNYASSQ (308 aa)). Positions 324–410 (RGRSPSNYAS…MEASKENEDP (87 aa)) are disordered. Composition is skewed to polar residues over residues 327 to 351 (SPSN…SQNS) and 386 to 401 (SGAS…STPM).

Binds to DNA as a monomer. Post-translationally, phosphorylated by pachytene checkpoint kinase IME2, but also phosphorylated in an IME2-independent manner. Phosphorylation probably eliminates SUM1-mediated repression and is also required for full transcriptional activation activity. Phosphorylation of the DNA-binding domain by IME2 does not alter DNA binding affinity.

It localises to the nucleus. Functionally, transcription factor required for successful completion of meiosis and spore formation. Gets activated after completion of meiotic recombination at the end of prophase I. Recognizes and binds to the middle sporulation element (MSE) 5'-C[AG]CAAA[AT]-3' in the promoter region of stage-specific genes that are required for progression through meiosis and sporulation. Competes for binding to MSE with the transcriptional repressor SUM1, which represses middle sporulation-specific genes during mitosis and early sporulation. In Saccharomyces cerevisiae (strain ATCC 204508 / S288c) (Baker's yeast), this protein is Meiosis-specific transcription factor NDT80 (NDT80).